Here is a 388-residue protein sequence, read N- to C-terminus: ATP phosphoribosyltransferase regulatory subunit (388 aa).

This sequence belongs to the class-II aminoacyl-tRNA synthetase family. HisZ subfamily. Heteromultimer composed of HisG and HisZ subunits.

The protein resides in the cytoplasm. It functions in the pathway amino-acid biosynthesis; L-histidine biosynthesis; L-histidine from 5-phospho-alpha-D-ribose 1-diphosphate: step 1/9. Required for the first step of histidine biosynthesis. May allow the feedback regulation of ATP phosphoribosyltransferase activity by histidine. The chain is ATP phosphoribosyltransferase regulatory subunit from Acinetobacter baylyi (strain ATCC 33305 / BD413 / ADP1).